The primary structure comprises 747 residues: Protein TraI (747 aa).

Disordered regions lie at residues 510–594 (LNKE…PQSQ) and 624–652 (VEQQ…TPPG). Over residues 513 to 526 (ENTHERTERPEHRG) the composition is skewed to basic and acidic residues. A compositionally biased stretch (low complexity) spans 537–562 (QRPAADQHATGAAAVARAGDGRPAAG).

Functionally, the initiation process of transfer DNA synthesis requires the interaction of at least three plasmid-specific components (TraH, TraI, and TraJ) at the transfer origin resulting in the assembly of a specialized nucleoprotein complex - the relaxosome. Site and strand specific cleavage at the transfer origin is dependent on TraI and TraJ. The polypeptide is Protein TraI (traI) (Escherichia coli).